Reading from the N-terminus, the 280-residue chain is Secreted RxLR effector protein 39 (280 aa).

An N-terminal signal peptide occupies residues 1 to 19 (MRGAYYVAIALLIVASCSA). The RxLR-dEER motif lies at 49–70 (RVLRGSRDLKNKWAVHAGGEDR). The tract at residues 229-249 (EVKARSSKRQRTNPMLNNMDG) is disordered.

Belongs to the RxLR effector family.

Its subcellular location is the secreted. The protein resides in the host nucleus. Its function is as follows. Secreted effector that completely suppresses the host cell death induced by cell death-inducing proteins. In Plasmopara viticola (Downy mildew of grapevine), this protein is Secreted RxLR effector protein 39.